Consider the following 377-residue polypeptide: Glycine oxidase (377 aa).

Residues valine 14 to isoleucine 15, glutamate 34 to lysine 35, alanine 42 to serine 43, alanine 47 to methionine 49, and valine 180 contribute to the FAD site. Substrate contacts are provided by arginine 309 and arginine 336. Histidine 334–leucine 340 provides a ligand contact to FAD.

This sequence belongs to the DAO family. ThiO subfamily. As to quaternary structure, homotetramer. It depends on FAD as a cofactor.

It catalyses the reaction glycine + O2 + H2O = glyoxylate + H2O2 + NH4(+). It carries out the reaction N-ethylglycine + O2 + H2O = ethylamine + glyoxylate + H2O2. The enzyme catalyses sarcosine + O2 + H2O = methylamine + glyoxylate + H2O2. The catalysed reaction is D-alanine + O2 + H2O = pyruvate + H2O2 + NH4(+). It functions in the pathway cofactor biosynthesis; thiamine diphosphate biosynthesis. Is inhibited at high substrate concentration. Functionally, catalyzes the FAD-dependent oxidative deamination of various amines and D-amino acids to yield the corresponding alpha-keto acids, ammonia/amine, and hydrogen peroxide. Oxidizes glycine, sarcosine (N-methylglycine), N-ethylglycine, D-proline, D-alanine, glycine-ethyl ester, and some other D-amino acids. Does not act on L-proline. Is essential for thiamine biosynthesis since the oxidation of glycine catalyzed by ThiO generates the glycine imine intermediate (dehydroglycine) required for the biosynthesis of the thiazole ring of thiamine pyrophosphate. In Geobacillus kaustophilus (strain HTA426), this protein is Glycine oxidase.